The sequence spans 297 residues: HTH-type transcriptional regulator ArgP (297 aa).

The HTH lysR-type domain occupies 4–60 (PDYRTLQALDAVIRERGFERAAQKLCITQSAVSQRIKQLENMFGQPLLVRTVPPRPT). Residues 21–40 (FERAAQKLCITQSAVSQRIK) constitute a DNA-binding region (H-T-H motif).

It belongs to the LysR transcriptional regulatory family. In terms of assembly, homodimer.

Controls the transcription of genes involved in arginine and lysine metabolism. The sequence is that of HTH-type transcriptional regulator ArgP from Escherichia coli O127:H6 (strain E2348/69 / EPEC).